The chain runs to 187 residues: NADH-quinone oxidoreductase subunit B (187 aa).

Positions 66, 67, 131, and 161 each coordinate [4Fe-4S] cluster.

The protein belongs to the complex I 20 kDa subunit family. In terms of assembly, NDH-1 is composed of 14 different subunits. Subunits NuoB, C, D, E, F, and G constitute the peripheral sector of the complex. Requires [4Fe-4S] cluster as cofactor.

The protein resides in the cell inner membrane. The catalysed reaction is a quinone + NADH + 5 H(+)(in) = a quinol + NAD(+) + 4 H(+)(out). In terms of biological role, NDH-1 shuttles electrons from NADH, via FMN and iron-sulfur (Fe-S) centers, to quinones in the respiratory chain. Couples the redox reaction to proton translocation (for every two electrons transferred, four hydrogen ions are translocated across the cytoplasmic membrane), and thus conserves the redox energy in a proton gradient. This Rhizorhabdus wittichii (strain DSM 6014 / CCUG 31198 / JCM 15750 / NBRC 105917 / EY 4224 / RW1) (Sphingomonas wittichii) protein is NADH-quinone oxidoreductase subunit B.